Reading from the N-terminus, the 383-residue chain is S-adenosylmethionine synthase (383 aa).

His-15 provides a ligand contact to ATP. A Mg(2+)-binding site is contributed by Asp-17. Glu-43 serves as a coordination point for K(+). L-methionine is bound by residues Glu-56 and Gln-99. The tract at residues 99 to 109 is flexible loop; it reads QSPDINQGVDR. ATP is bound by residues 164 to 166, 230 to 231, Asp-239, 245 to 246, Ala-262, and Lys-266; these read DAK, RF, and RK. Asp-239 contacts L-methionine. Lys-270 is an L-methionine binding site.

The protein belongs to the AdoMet synthase family. In terms of assembly, homotetramer; dimer of dimers. The cofactor is Mg(2+). K(+) serves as cofactor.

The protein localises to the cytoplasm. It carries out the reaction L-methionine + ATP + H2O = S-adenosyl-L-methionine + phosphate + diphosphate. It functions in the pathway amino-acid biosynthesis; S-adenosyl-L-methionine biosynthesis; S-adenosyl-L-methionine from L-methionine: step 1/1. In terms of biological role, catalyzes the formation of S-adenosylmethionine (AdoMet) from methionine and ATP. The overall synthetic reaction is composed of two sequential steps, AdoMet formation and the subsequent tripolyphosphate hydrolysis which occurs prior to release of AdoMet from the enzyme. In Pectobacterium atrosepticum (strain SCRI 1043 / ATCC BAA-672) (Erwinia carotovora subsp. atroseptica), this protein is S-adenosylmethionine synthase.